Here is a 335-residue protein sequence, read N- to C-terminus: Phosphate acyltransferase (335 aa).

It belongs to the PlsX family. In terms of assembly, homodimer. Probably interacts with PlsY.

It localises to the cytoplasm. It catalyses the reaction a fatty acyl-[ACP] + phosphate = an acyl phosphate + holo-[ACP]. It functions in the pathway lipid metabolism; phospholipid metabolism. Catalyzes the reversible formation of acyl-phosphate (acyl-PO(4)) from acyl-[acyl-carrier-protein] (acyl-ACP). This enzyme utilizes acyl-ACP as fatty acyl donor, but not acyl-CoA. The polypeptide is Phosphate acyltransferase (Alkaliphilus oremlandii (strain OhILAs) (Clostridium oremlandii (strain OhILAs))).